The following is a 421-amino-acid chain: Imidazolonepropionase (421 aa).

Residues His-81 and His-83 each contribute to the Fe(3+) site. Residues His-81 and His-83 each contribute to the Zn(2+) site. 4-imidazolone-5-propanoate-binding residues include Arg-90, Tyr-153, and His-186. Residue Tyr-153 coordinates N-formimidoyl-L-glutamate. His-251 is a binding site for Fe(3+). His-251 contributes to the Zn(2+) binding site. Glu-254 is a binding site for 4-imidazolone-5-propanoate. Asp-326 lines the Fe(3+) pocket. Asp-326 provides a ligand contact to Zn(2+). N-formimidoyl-L-glutamate is bound by residues Asn-328 and Gly-330. Residue Ser-331 participates in 4-imidazolone-5-propanoate binding.

This sequence belongs to the metallo-dependent hydrolases superfamily. HutI family. Zn(2+) is required as a cofactor. Fe(3+) serves as cofactor.

Its subcellular location is the cytoplasm. It catalyses the reaction 4-imidazolone-5-propanoate + H2O = N-formimidoyl-L-glutamate. It functions in the pathway amino-acid degradation; L-histidine degradation into L-glutamate; N-formimidoyl-L-glutamate from L-histidine: step 3/3. Its function is as follows. Catalyzes the hydrolytic cleavage of the carbon-nitrogen bond in imidazolone-5-propanoate to yield N-formimidoyl-L-glutamate. It is the third step in the universal histidine degradation pathway. The polypeptide is Imidazolonepropionase (Streptococcus pyogenes serotype M12 (strain MGAS2096)).